We begin with the raw amino-acid sequence, 312 residues long: Acetylglutamate kinase (312 aa).

Residues 76-77 (GG), Arg-98, and Asn-199 each bind substrate.

Belongs to the acetylglutamate kinase family. ArgB subfamily.

It localises to the cytoplasm. It carries out the reaction N-acetyl-L-glutamate + ATP = N-acetyl-L-glutamyl 5-phosphate + ADP. It functions in the pathway amino-acid biosynthesis; L-arginine biosynthesis; N(2)-acetyl-L-ornithine from L-glutamate: step 2/4. Its function is as follows. Catalyzes the ATP-dependent phosphorylation of N-acetyl-L-glutamate. The polypeptide is Acetylglutamate kinase (Beutenbergia cavernae (strain ATCC BAA-8 / DSM 12333 / CCUG 43141 / JCM 11478 / NBRC 16432 / NCIMB 13614 / HKI 0122)).